The sequence spans 278 residues: Pantothenate synthetase (278 aa).

27-34 serves as a coordination point for ATP; sequence MGYLHEGH. Residue His-34 is the Proton donor of the active site. Gln-58 is a (R)-pantoate binding site. Gln-58 is a beta-alanine binding site. 144–147 contributes to the ATP binding site; sequence GQKD. Gln-150 contributes to the (R)-pantoate binding site. ATP-binding positions include Val-173 and 181 to 184; that span reads MSSR.

The protein belongs to the pantothenate synthetase family. Homodimer.

Its subcellular location is the cytoplasm. It carries out the reaction (R)-pantoate + beta-alanine + ATP = (R)-pantothenate + AMP + diphosphate + H(+). It functions in the pathway cofactor biosynthesis; (R)-pantothenate biosynthesis; (R)-pantothenate from (R)-pantoate and beta-alanine: step 1/1. Catalyzes the condensation of pantoate with beta-alanine in an ATP-dependent reaction via a pantoyl-adenylate intermediate. The sequence is that of Pantothenate synthetase from Roseiflexus castenholzii (strain DSM 13941 / HLO8).